An 86-amino-acid chain; its full sequence is UPF0297 protein LSL_1110 (86 aa).

The protein belongs to the UPF0297 family.

The chain is UPF0297 protein LSL_1110 from Ligilactobacillus salivarius (strain UCC118) (Lactobacillus salivarius).